We begin with the raw amino-acid sequence, 281 residues long: GDT1-like protein 4 (281 aa).

The first 22 residues, methionine 1 to alanine 22, serve as a signal peptide directing secretion. 6 helical membrane passes run alanine 66 to isoleucine 86, threonine 105 to glycine 125, threonine 137 to tryptophan 157, isoleucine 188 to glutamate 208, alanine 226 to valine 246, and glycine 258 to tyrosine 278.

This sequence belongs to the GDT1 family.

The protein localises to the membrane. The polypeptide is GDT1-like protein 4 (Oryza sativa subsp. indica (Rice)).